Consider the following 215-residue polypeptide: Deoxyribose-phosphate aldolase (215 aa).

Residue Asp-90 is the Proton donor/acceptor of the active site. Lys-152 acts as the Schiff-base intermediate with acetaldehyde in catalysis. Catalysis depends on Lys-181, which acts as the Proton donor/acceptor.

It belongs to the DeoC/FbaB aldolase family. DeoC type 1 subfamily.

The protein resides in the cytoplasm. The catalysed reaction is 2-deoxy-D-ribose 5-phosphate = D-glyceraldehyde 3-phosphate + acetaldehyde. Its pathway is carbohydrate degradation; 2-deoxy-D-ribose 1-phosphate degradation; D-glyceraldehyde 3-phosphate and acetaldehyde from 2-deoxy-alpha-D-ribose 1-phosphate: step 2/2. In terms of biological role, catalyzes a reversible aldol reaction between acetaldehyde and D-glyceraldehyde 3-phosphate to generate 2-deoxy-D-ribose 5-phosphate. The sequence is that of Deoxyribose-phosphate aldolase from Ureaplasma urealyticum serovar 10 (strain ATCC 33699 / Western).